Consider the following 566-residue polypeptide: Solute carrier family 22 member 16 (566 aa).

A helical membrane pass occupies residues 20–40; it reads FASAFQTISCGIHYLASVFIA. N-linked (GlcNAc...) asparagine glycans are attached at residues N52, N60, and N112. 5 helical membrane-spanning segments follow: residues 149–169, 176–196, 201–221, 237–257, and 261–281; these read LIQP…GDIA, PIIW…AFTF, FVIV…VVFV, MHVH…GFLV, and WIYQ…CWML. N344 is a glycosylation site (N-linked (GlcNAc...) asparagine). Helical transmembrane passes span 351-371, 381-401, 408-428, 436-456, 468-488, and 493-513; these read TITV…FALN, LNLF…CLGM, NTLA…MLIP, IAMS…IYLY, LAVG…PFCV, and VWIF…GILT.

It belongs to the major facilitator (TC 2.A.1) superfamily. Organic cation transporter (TC 2.A.1.19) family.

Its subcellular location is the membrane. Its function is as follows. High affinity carnitine transporter. In Xenopus laevis (African clawed frog), this protein is Solute carrier family 22 member 16 (slc22a16).